We begin with the raw amino-acid sequence, 442 residues long: C4-dicarboxylate transport protein (442 aa).

8 helical membrane passes run 19-39, 55-75, 90-110, 161-181, 199-219, 232-252, 318-338, and 366-386; these read QLYFQVVVAIVAGVLLGHFEP, LVKMIIAPVIFLTIVTGIAGM, AYFLFFSTLALVVGMVVAHVV, ILQVLFVAVLFGISLAMVGDA, LVGILMKAAPLGAFGAIAFTI, WLVGSFYITSLLFVVVVLGFV, IYMTLAALFIAQATNTHLTLG, and AATLAVVPEVPVAGMALILGV.

Belongs to the dicarboxylate/amino acid:cation symporter (DAACS) (TC 2.A.23) family.

It localises to the cell inner membrane. Responsible for the transport of dicarboxylates such as succinate, fumarate, and malate from the periplasm across the membrane. The sequence is that of C4-dicarboxylate transport protein from Delftia acidovorans (strain DSM 14801 / SPH-1).